Consider the following 367-residue polypeptide: Membrane-bound lytic murein transglycosylase C (367 aa).

An N-terminal signal peptide occupies residues 1-19 (MRKYAKYLPFCLVVPFLAA). The N-palmitoyl cysteine moiety is linked to residue Cys20. Cys20 carries the S-diacylglycerol cysteine lipid modification.

It belongs to the transglycosylase Slt family.

It is found in the cell outer membrane. The catalysed reaction is Exolytic cleavage of the (1-&gt;4)-beta-glycosidic linkage between N-acetylmuramic acid (MurNAc) and N-acetylglucosamine (GlcNAc) residues in peptidoglycan, from either the reducing or the non-reducing ends of the peptidoglycan chains, with concomitant formation of a 1,6-anhydrobond in the MurNAc residue.. Murein-degrading enzyme. May play a role in recycling of muropeptides during cell elongation and/or cell division. The sequence is that of Membrane-bound lytic murein transglycosylase C from Haemophilus ducreyi (strain 35000HP / ATCC 700724).